The primary structure comprises 471 residues: DnaJ protein P58IPK homolog B (471 aa).

The signal sequence occupies residues 1–24 (MARWPWRWRVLLPLLLLHSSPVFA). 8 TPR repeats span residues 32 to 65 (PSTLFKRASEMMNLRKYDGSLGLLNAVLEVDPNH), 66 to 99 (SEAYRQRASVLRHKCRYKEAEGDYSKYLELKPGS), 112 to 146 (AQNALESAYGQFESHDFSKVLEYINKIVLVFSPNC), 148 to 180 (KAKLLKAKALLALEDYSSVISETGFILKEDEDN), 181 to 214 (LDALLLRGRAYYYLADHDVASRHYQKGLRLDPEH), 227 to 260 (LLKKTKSAEDNAAKGKLRVSAEDYKAALAMDPDH), 265 to 298 (VHLYLGLCKVLVKLGRGKEAISSCTEALNIDGEL), and 300 to 332 (DALTQRGEAKLLTEDWEGAVQDLKEASQKSPQD). N-linked (GlcNAc...) asparagine glycosylation is present at Asn-64. The J domain maps to 353-419 (DWYKILGISK…DKRVRYDRGE (67 aa)).

As to quaternary structure, interacts with BIP1.

The protein resides in the endoplasmic reticulum lumen. May play a role in protein folding in the endoplasmic reticulum. This Oryza sativa subsp. japonica (Rice) protein is DnaJ protein P58IPK homolog B.